The following is a 94-amino-acid chain: Large ribosomal subunit protein uL23 (94 aa).

The protein belongs to the universal ribosomal protein uL23 family. In terms of assembly, part of the 50S ribosomal subunit. Contacts protein L29, and trigger factor when it is bound to the ribosome.

One of the early assembly proteins it binds 23S rRNA. One of the proteins that surrounds the polypeptide exit tunnel on the outside of the ribosome. Forms the main docking site for trigger factor binding to the ribosome. The chain is Large ribosomal subunit protein uL23 from Ligilactobacillus salivarius (strain UCC118) (Lactobacillus salivarius).